Consider the following 667-residue polypeptide: E3 ubiquitin-protein ligase RNF6 (667 aa).

7 disordered regions span residues M1–Q25, K75–S100, G116–F216, F295–S355, E396–E419, G507–M532, and E537–R556. Residues A79–D90 show a composition bias toward low complexity. Residues G116–S139 show a composition bias toward polar residues. Basic and acidic residues predominate over residues I150–D163. Over residues S191 to P200 the composition is skewed to low complexity. Residues S296–N327 are compositionally biased toward polar residues. Positions H516–A530 are enriched in low complexity. The residue at position 559 (S559) is a Phosphoserine. Residues C614 to R655 form an RING-type; atypical zinc finger.

It belongs to the RNF12 family. In terms of tissue distribution, widely expressed with higher expression in the testis in both germ cells and Sertoli cells.

The protein localises to the nucleus. It localises to the cytoplasm. Its subcellular location is the cell projection. It is found in the axon. The protein resides in the PML body. The catalysed reaction is S-ubiquitinyl-[E2 ubiquitin-conjugating enzyme]-L-cysteine + [acceptor protein]-L-lysine = [E2 ubiquitin-conjugating enzyme]-L-cysteine + N(6)-ubiquitinyl-[acceptor protein]-L-lysine.. Its pathway is protein modification; protein ubiquitination. In terms of biological role, E3 ubiquitin-protein ligase mediating 'Lys-48'-linked polyubiquitination of LIMK1 and its subsequent targeting to the proteasome for degradation. Negatively regulates axonal outgrowth through regulation of the LIMK1 turnover. Mediates 'Lys-6' and 'Lys-27'-linked polyubiquitination of AR/androgen receptor thereby modulating its transcriptional activity. May also bind DNA and function as a transcriptional regulator. Mediates polyubiquitination of QKI in macrophages, leading to its degradation. In Mus musculus (Mouse), this protein is E3 ubiquitin-protein ligase RNF6.